The chain runs to 433 residues: Eukaryotic translation initiation factor 3 subunit E (433 aa).

The region spanning 217 to 390 is the PCI domain; that stretch reads FFNHGKGRDL…GHVVMGTQPL (174 aa).

Belongs to the eIF-3 subunit E family. As to quaternary structure, component of the eukaryotic translation initiation factor 3 (eIF-3) complex.

The protein resides in the cytoplasm. Its function is as follows. Component of the eukaryotic translation initiation factor 3 (eIF-3) complex, which is involved in protein synthesis of a specialized repertoire of mRNAs and, together with other initiation factors, stimulates binding of mRNA and methionyl-tRNAi to the 40S ribosome. The eIF-3 complex specifically targets and initiates translation of a subset of mRNAs involved in cell proliferation. The polypeptide is Eukaryotic translation initiation factor 3 subunit E (eIF3-S6) (Anopheles gambiae (African malaria mosquito)).